Here is a 364-residue protein sequence, read N- to C-terminus: Tripartite motif-containing protein 54 (364 aa).

Residues 26–82 (CPICLEMFSKPVVILPCQHNLCRKCANDVFQASNPLWQSRGSTTVSSGGRFRCPSCR) form an RING-type zinc finger. A B box-type zinc finger spans residues 121–163 (EQHLMCEEHEDEKINIYCLSCEVPTCSLCKVFGAHKDCEVAPL). Zn(2+) is bound by residues C126, H129, C149, and H155. Positions 168-211 (KRQKSELSDGIAMLVAGNDRVQAVITQMEEVCQTIEDNSRRQKQ) are mediates microtubule-binding and homooligomerization. The stretch at 194 to 252 (QMEEVCQTIEDNSRRQKQLLNQKFETLCAVLEERKGELLQALARVQEEKLQRVRSLIRQ) forms a coiled coil. One can recognise a COS domain in the interval 271-329 (MEEPQMALYLQQAKELINKVGAMSKVELAGRPEPGYESMEQFSVIVEHVAEMLRTIDFQ). The disordered stretch occupies residues 328 to 364 (FQPGASGDEEDDEVTLDGEEGNTGLEEERLDGPEGLH). The span at 334-347 (GDEEDDEVTLDGEE) shows a compositional bias: acidic residues. Over residues 353–364 (EEERLDGPEGLH) the composition is skewed to basic and acidic residues.

As to quaternary structure, homooligomer and heterooligomer. Interacts with TRIM63 and probably with TRIM55. Interacts with tubulin.

It is found in the cytoplasm. Its subcellular location is the cytoskeleton. It localises to the myofibril. The protein localises to the sarcomere. The protein resides in the z line. Functionally, may bind and stabilize microtubules during myotubes formation. The chain is Tripartite motif-containing protein 54 (Trim54) from Rattus norvegicus (Rat).